The chain runs to 449 residues: 3-phosphoshikimate 1-carboxyvinyltransferase (449 aa).

Positions 1 to 29 are disordered; the sequence is MSHDSVPSPITARAGTPLRGRLRPPGDKS. 3 residues coordinate 3-phosphoshikimate: K28, S29, and R33. A phosphoenolpyruvate-binding site is contributed by K28. G101 and R129 together coordinate phosphoenolpyruvate. 3-phosphoshikimate-binding residues include S175, Q177, D330, and K357. Q177 provides a ligand contact to phosphoenolpyruvate. The Proton acceptor role is filled by D330. Phosphoenolpyruvate-binding residues include R361 and R405.

The protein belongs to the EPSP synthase family. As to quaternary structure, monomer.

The protein localises to the cytoplasm. The catalysed reaction is 3-phosphoshikimate + phosphoenolpyruvate = 5-O-(1-carboxyvinyl)-3-phosphoshikimate + phosphate. Its pathway is metabolic intermediate biosynthesis; chorismate biosynthesis; chorismate from D-erythrose 4-phosphate and phosphoenolpyruvate: step 6/7. Its function is as follows. Catalyzes the transfer of the enolpyruvyl moiety of phosphoenolpyruvate (PEP) to the 5-hydroxyl of shikimate-3-phosphate (S3P) to produce enolpyruvyl shikimate-3-phosphate and inorganic phosphate. This chain is 3-phosphoshikimate 1-carboxyvinyltransferase, found in Methylobacterium sp. (strain 4-46).